Reading from the N-terminus, the 855-residue chain is Spindle and centriole-associated protein 1 (855 aa).

A disordered region spans residues 164 to 200 (QALNDVDGEEEGTVTSQSGESENENELDNSLNSQSNT). Position 235 is a phosphothreonine (threonine 235). Residues 300–311 (KPNLHALSKPKK) show a composition bias toward basic residues. The segment at 300 to 328 (KPNLHALSKPKKNMLSGSTTSADLPNRTN) is disordered. Over residues 314–328 (LSGSTTSADLPNRTN) the composition is skewed to polar residues. The stretch at 325–437 (NRTNSNLDVL…TQARLRQYMV (113 aa)) forms a coiled coil. Residues serine 640 and serine 644 each carry the phosphoserine modification. Positions 725-751 (GSMEERIAELNRQSMEARGKLLQLIEQ) form a coiled coil. Serine 760, serine 764, and serine 819 each carry phosphoserine. The disordered stretch occupies residues 789–834 (EAPESSKCSTVSPVSEINTRRSSGATSNSCSPLNATSGSGRFTPLN). Polar residues predominate over residues 794–828 (SKCSTVSPVSEINTRRSSGATSNSCSPLNATSGSG).

Interacts with CEP120.

The protein localises to the cytoplasm. It localises to the cytoskeleton. It is found in the microtubule organizing center. Its subcellular location is the centrosome. The protein resides in the centriole. The protein localises to the spindle. Functionally, regulator required for centriole duplication, for proper bipolar spindle formation and chromosome congression in mitosis. The polypeptide is Spindle and centriole-associated protein 1 (SPICE1) (Pongo abelii (Sumatran orangutan)).